We begin with the raw amino-acid sequence, 458 residues long: MDQSNRYARLDLKEADLIAGGRHVLCAYVMKPKAGYGYLETAAHFAAESSTGTNVEVSTTDDFTRGVDALVYEIDPEKEIMKIAYPVELFDRNIIDGRAMLCSFLTLTIGNNQGMGDVEYAKMHEFYVPPCYLRLFDGPSMNIADMWRVLGRPVVDGGMVVGTIIKPKLGLRPKPFADACYEFWLGGDFIKNDEPQGNQTFAPLKETIRLVADAMKRAQDETGEAKLFSANITADDHYEMVARGEYILETFGENADHVAFLVDGYVTGPAAITTARRQFPRQFLHYHRAGHGAVTSPQSMRGYTAFVLSKMSRLQGASGIHTGTMGYGKMEGDASDKIMAYMLTDEAAQGPFYHQDWLGMKATTPIISGGMNALRLPGFFDNLGHSNVIQTSGGGAFGHLDGGTAGAKSLRQSCDAWKAGVDLVTYAKSHRELARAFESFPNDADKLYPGWRVALGVN.

Residue N111 participates in substrate binding. K166 serves as the catalytic Proton acceptor. K168 contacts substrate. K191, D193, and E194 together coordinate Mg(2+). K191 carries the post-translational modification N6-carboxylysine. The Proton acceptor role is filled by H287. R288, H321, and S368 together coordinate substrate.

It belongs to the RuBisCO large chain family. Type II subfamily. In terms of assembly, homodimer. Mg(2+) is required as a cofactor.

The enzyme catalyses 2 (2R)-3-phosphoglycerate + 2 H(+) = D-ribulose 1,5-bisphosphate + CO2 + H2O. It carries out the reaction D-ribulose 1,5-bisphosphate + O2 = 2-phosphoglycolate + (2R)-3-phosphoglycerate + 2 H(+). Functionally, ruBisCO catalyzes two reactions: the carboxylation of D-ribulose 1,5-bisphosphate, the primary event in carbon dioxide fixation, as well as the oxidative fragmentation of the pentose substrate. Both reactions occur simultaneously and in competition at the same active site. The sequence is that of Ribulose bisphosphate carboxylase (cbbM) from Rhodobacter capsulatus (strain ATCC BAA-309 / NBRC 16581 / SB1003).